The following is a 179-amino-acid chain: Putative ADP-ribosylation factor-like protein 5C (179 aa).

A lipid anchor (N-myristoyl glycine) is attached at Gly2. Residues 23-30, 66-70, and 125-128 each bind GTP; these read GLDNEGKT, DIVRP, and NKQD.

The protein belongs to the small GTPase superfamily. Arf family.

In terms of biological role, binds and exchanges GTP and GDP. The polypeptide is Putative ADP-ribosylation factor-like protein 5C (ARL5C) (Homo sapiens (Human)).